Here is a 303-residue protein sequence, read N- to C-terminus: Quinolinate synthase (303 aa).

Positions 24 and 41 each coordinate iminosuccinate. Cys86 is a [4Fe-4S] cluster binding site. Residues 112–114 (YVN) and Ser129 contribute to the iminosuccinate site. Position 172 (Cys172) interacts with [4Fe-4S] cluster. Iminosuccinate is bound by residues 198 to 200 (HPE) and Thr215. Cys260 is a binding site for [4Fe-4S] cluster.

The protein belongs to the quinolinate synthase family. Type 2 subfamily. It depends on [4Fe-4S] cluster as a cofactor.

Its subcellular location is the cytoplasm. It catalyses the reaction iminosuccinate + dihydroxyacetone phosphate = quinolinate + phosphate + 2 H2O + H(+). Its pathway is cofactor biosynthesis; NAD(+) biosynthesis; quinolinate from iminoaspartate: step 1/1. Catalyzes the condensation of iminoaspartate with dihydroxyacetone phosphate to form quinolinate. The chain is Quinolinate synthase from Clostridium kluyveri (strain NBRC 12016).